A 500-amino-acid chain; its full sequence is Chromosomal replication initiator protein DnaA (500 aa).

The interval 1–37 is disordered; sequence MSDTPFGDADHPRPAPIHPDAVLPPPMSSQSADNDPT. Positions 1–103 are domain I, interacts with DnaA modulators; it reads MSDTPFGDAD…EELLSDHFHK (103 aa). A compositionally biased stretch (pro residues) spans 14–27; it reads PAPIHPDAVLPPPM. Residues 103–161 are domain II; the sequence is KAIHLAITIDPDLELALGAPDHEDEEEEVPPAQFVPKVTVGVTEPSARPTTTIDDDEGN. The segment at 162 to 378 is domain III, AAA+ region; that stretch reads RLNPKYTFDS…GALIRVTAFA (217 aa). ATP-binding residues include Gly-206, Gly-208, Lys-209, and Thr-210. The segment at 379–500 is domain IV, binds dsDNA; it reads SLNQQPVDIS…SEITNRIKQY (122 aa).

Belongs to the DnaA family. Oligomerizes as a right-handed, spiral filament on DNA at oriC.

It localises to the cytoplasm. In terms of biological role, plays an essential role in the initiation and regulation of chromosomal replication. ATP-DnaA binds to the origin of replication (oriC) to initiate formation of the DNA replication initiation complex once per cell cycle. Binds the DnaA box (a 9 base pair repeat at the origin) and separates the double-stranded (ds)DNA. Forms a right-handed helical filament on oriC DNA; dsDNA binds to the exterior of the filament while single-stranded (ss)DNA is stabiized in the filament's interior. The ATP-DnaA-oriC complex binds and stabilizes one strand of the AT-rich DNA unwinding element (DUE), permitting loading of DNA polymerase. After initiation quickly degrades to an ADP-DnaA complex that is not apt for DNA replication. Binds acidic phospholipids. This chain is Chromosomal replication initiator protein DnaA, found in Cutibacterium acnes (strain DSM 16379 / KPA171202) (Propionibacterium acnes).